Consider the following 407-residue polypeptide: (R)-phenyllactyl-CoA dehydratase alpha subunit (407 aa).

Residues 1–4 (MSDR) constitute a propeptide that is removed on maturation.

Belongs to the FldB/FldC dehydratase alpha/beta subunit family. Part of the heterotrimeric phenyllactate dehydratase complex FldABC, composed of (R)-phenyllactate CoA-transferase (FldA) and a heterodimeric (R)-phenyllactyl-CoA dehydratase (FldB and FldC). It depends on [4Fe-4S] cluster as a cofactor. Requires No flavin could be detected in the FldABC complex, and the addition of FAD, FMN or riboflavin to the dehydratase do not increase enzymatic activity. as cofactor.

The enzyme catalyses (R)-3-phenyllactoyl-CoA = (E)-cinnamoyl-CoA + H2O. The catalysed reaction is (R)-3-(4-hydroxyphenyl)lactoyl-CoA = (E)-4-coumaroyl-CoA + H2O. It catalyses the reaction (R)-3-(indol-3-yl)lactoyl-CoA = (E)-3-(indol-3-yl)acryloyl-CoA + H2O. The protein operates within amino-acid degradation; L-phenylalanine degradation. Its function is as follows. Component of the phenyllactate dehydratase complex FldABC that is involved in the fermentation of L-phenylalanine via a Stickland reaction. This complex catalyzes the reversible syn-dehydration of (R)-phenyllactate to (E)-cinnamate in two steps, a CoA-transfer from cinnamoyl-CoA to phenyllactate, catalyzed by FldA, followed by the dehydration of phenyllactyl-CoA to cinnamoyl-CoA, catalyzed by FldB and FldC. Requires the activator FldI to initiate catalysis. This is (R)-phenyllactyl-CoA dehydratase alpha subunit from Clostridium sporogenes.